Reading from the N-terminus, the 275-residue chain is 2,3,4,5-tetrahydropyridine-2,6-dicarboxylate N-succinyltransferase (275 aa).

2 residues coordinate substrate: Arg-106 and Asp-143.

It belongs to the transferase hexapeptide repeat family. As to quaternary structure, homotrimer.

It is found in the cytoplasm. It carries out the reaction (S)-2,3,4,5-tetrahydrodipicolinate + succinyl-CoA + H2O = (S)-2-succinylamino-6-oxoheptanedioate + CoA. Its pathway is amino-acid biosynthesis; L-lysine biosynthesis via DAP pathway; LL-2,6-diaminopimelate from (S)-tetrahydrodipicolinate (succinylase route): step 1/3. The polypeptide is 2,3,4,5-tetrahydropyridine-2,6-dicarboxylate N-succinyltransferase (Burkholderia pseudomallei (strain 1106a)).